The sequence spans 174 residues: FMN reductase (NADH) RutF (174 aa).

It belongs to the non-flavoprotein flavin reductase family. RutF subfamily.

It catalyses the reaction FMNH2 + NAD(+) = FMN + NADH + 2 H(+). Functionally, catalyzes the reduction of FMN to FMNH2 which is used to reduce pyrimidine by RutA via the Rut pathway. The chain is FMN reductase (NADH) RutF from Stutzerimonas stutzeri (strain A1501) (Pseudomonas stutzeri).